The sequence spans 435 residues: 5-hydroxybenzimidazole synthase (435 aa).

Substrate-binding positions include Met95, Tyr124, His163, 186 to 188, 227 to 230, and Glu266; these read SKG and NGLR. His270 contacts Zn(2+). Residue Tyr293 participates in substrate binding. His334 contributes to the Zn(2+) binding site. [4Fe-4S] cluster is bound by residues Cys410, Cys413, and Cys417.

It belongs to the ThiC family. 5-hydroxybenzimidazole synthase subfamily. As to quaternary structure, homodimer. The cofactor is [4Fe-4S] cluster.

It catalyses the reaction 5-amino-1-(5-phospho-beta-D-ribosyl)imidazole + AH2 + S-adenosyl-L-methionine = 5-hydroxybenzimidazole + 5'-deoxyadenosine + formate + L-methionine + A + NH4(+) + phosphate + 2 H(+). Its function is as follows. Catalyzes the conversion of aminoimidazole ribotide (AIR) to 5-hydroxybenzimidazole (5-HBI) in a radical S-adenosyl-L-methionine (SAM)-dependent reaction. Is thus involved in the anaerobic biosynthesis of the benzimidazole lower axial ligand of the cobamide produced by G.metallireducens. The chain is 5-hydroxybenzimidazole synthase from Geobacter metallireducens (strain ATCC 53774 / DSM 7210 / GS-15).